We begin with the raw amino-acid sequence, 384 residues long: MVQFFKRPLLDIVHNHLIEYPTPVNIHYFWNFGFLAFICLAVQIITGIFLAIHYTPHVDLAFYSVEHIIRDVNYGWLLRYAHANGASIFFIIIYIHISRGLYYGSYVAPRHFTWVVGVFILLLIMATAFMGYVLPWGQISLWGATVITNLVSAVPLVGNSIVTWLWGGFSVDNATLNRFFSFHYLFPFIIVAIAFVHMAFLHQKGSGNPLGLIQPVDKISMYPYFIIKDAFGLVLFLLFFSLFVYFLPNLLGHPDNYIEANPIVTPNHIVPEWYFLPFYAILRSIPHKLGGVIAIIISILILAFLPWITNINVRSSLFRPLYKKLFWILFSIVLILGWIGGKPVEMPYVVIGQLITFLYFVYFLIFIPFLGRLEKFLVNYKTVY.

A run of 4 helical transmembrane segments spans residues Phe-32 to Ile-52, Trp-76 to Ser-98, Thr-113 to Val-133, and Phe-179 to Ala-199. Residues His-82 and His-96 each contribute to the heme b site. The heme b site is built by His-183 and His-197. His-202 provides a ligand contact to a ubiquinone. The next 4 membrane-spanning stretches (helical) occupy residues Phe-225 to Tyr-245, Leu-289 to Thr-309, Leu-321 to Gly-341, and Tyr-348 to Pro-368.

This sequence belongs to the cytochrome b family. The main subunits of complex b-c1 are: cytochrome b, cytochrome c1 and the Rieske protein. The cofactor is heme b.

It is found in the mitochondrion inner membrane. Its function is as follows. Component of the ubiquinol-cytochrome c reductase complex (complex III or cytochrome b-c1 complex) that is part of the mitochondrial respiratory chain. The b-c1 complex mediates electron transfer from ubiquinol to cytochrome c. Contributes to the generation of a proton gradient across the mitochondrial membrane that is then used for ATP synthesis. The chain is Cytochrome b (MT-CYB) from Cyanidium caldarium (Red alga).